The primary structure comprises 350 residues: MKLVDEAEILVTAGHGGNGCVGFRREKFIPLGGPDGGDGGSGGSVWIVADENVNTLVDFRHERTFKAQRGENGMGRQAYGKGGEDRIIVVPVGTVVINVQTDEVIGDLTRHGDRLLVAKGGKGGLGNMHFKSSVNRAPRQSTTGEEGEERLLKLELRLLADVGLLGFPNAGKSTLIRAVSSATPKVADYPFTTLYPNLGVVSVEAYRSFVIADVPGLIEGAADGAGLGTQFLRHLQRTRLLLHLVDMAPMDGGVDGVSPADQVRTLERELERHDPQLLKKPRWLVLNKADLMFEDEARAAAETIVAELGWTAPWYLVSALGRDGTFPIMKDVMAFFDRQREDELEARNAG.

In terms of domain architecture, Obg spans 1 to 159; it reads MKLVDEAEIL…RLLKLELRLL (159 aa). Residues 127–146 form a disordered region; that stretch reads NMHFKSSVNRAPRQSTTGEE. A compositionally biased stretch (polar residues) spans 130–143; that stretch reads FKSSVNRAPRQSTT. The region spanning 160 to 337 is the OBG-type G domain; the sequence is ADVGLLGFPN…IMKDVMAFFD (178 aa). GTP-binding positions include 166–173, 191–195, 213–216, 287–290, and 318–320; these read GFPNAGKS, FTTLY, DVPG, NKAD, and SAL. 2 residues coordinate Mg(2+): Ser-173 and Thr-193.

The protein belongs to the TRAFAC class OBG-HflX-like GTPase superfamily. OBG GTPase family. Monomer. Requires Mg(2+) as cofactor.

The protein localises to the cytoplasm. Its function is as follows. An essential GTPase which binds GTP, GDP and possibly (p)ppGpp with moderate affinity, with high nucleotide exchange rates and a fairly low GTP hydrolysis rate. Plays a role in control of the cell cycle, stress response, ribosome biogenesis and in those bacteria that undergo differentiation, in morphogenesis control. The sequence is that of GTPase Obg from Xanthomonas oryzae pv. oryzae (strain MAFF 311018).